The sequence spans 249 residues: uncharacterized protein (249 aa).

The first 36 residues, methionine 1–alanine 36, serve as a signal peptide directing secretion. The interval alanine 227–glutamine 249 is disordered.

This is an uncharacterized protein from Mycobacterium tuberculosis (strain CDC 1551 / Oshkosh).